The chain runs to 196 residues: Ribosome-binding factor A (196 aa).

It belongs to the RbfA family. Monomer. Binds 30S ribosomal subunits, but not 50S ribosomal subunits or 70S ribosomes.

The protein resides in the cytoplasm. Functionally, one of several proteins that assist in the late maturation steps of the functional core of the 30S ribosomal subunit. Associates with free 30S ribosomal subunits (but not with 30S subunits that are part of 70S ribosomes or polysomes). Required for efficient processing of 16S rRNA. May interact with the 5'-terminal helix region of 16S rRNA. The protein is Ribosome-binding factor A of Tropheryma whipplei (strain TW08/27) (Whipple's bacillus).